Here is a 104-residue protein sequence, read N- to C-terminus: Protamine-2 (104 aa).

Residues 1–91 (MVRYRMRSPS…RRGCRRSRRR (91 aa)) are disordered. Phosphoserine is present on residues Ser-8, Ser-10, and Ser-33. Basic and acidic residues predominate over residues 33–44 (SPERVEDYGRTE). The segment covering 45-91 (RGHHHRHRRCKRLHRIHKRRRSCRRRRRHSCRHRRRHRRGCRRSRRR) has biased composition (basic residues).

This sequence belongs to the protamine P2 family. Interacts with TDRP. Post-translationally, proteolytic processing into mature chains is required for histone eviction during spermatogenesis. Transition proteins (TNP1 and TNP2) are required for processing. Testis.

The protein localises to the nucleus. It localises to the chromosome. Functionally, protamines substitute for histones in the chromatin of sperm during the haploid phase of spermatogenesis. They compact sperm DNA into a highly condensed, stable and inactive complex. This is Protamine-2 (Prm2) from Rattus norvegicus (Rat).